We begin with the raw amino-acid sequence, 455 residues long: Bifunctional protein GlmU (455 aa).

The segment at methionine 1–arginine 226 is pyrophosphorylase. UDP-N-acetyl-alpha-D-glucosamine contacts are provided by residues leucine 8–glycine 11, lysine 22, glutamine 73, glycine 78–threonine 79, tyrosine 99–aspartate 101, glycine 136, glutamate 151, asparagine 166, and asparagine 224. Aspartate 101 contacts Mg(2+). Asparagine 224 serves as a coordination point for Mg(2+). The interval arginine 227 to glutamine 247 is linker. Positions glycine 248–serine 455 are N-acetyltransferase. Residues arginine 330 and lysine 348 each contribute to the UDP-N-acetyl-alpha-D-glucosamine site. Histidine 360 (proton acceptor) is an active-site residue. UDP-N-acetyl-alpha-D-glucosamine is bound by residues tyrosine 363 and asparagine 374. Residues alanine 377, asparagine 383 to tyrosine 384, serine 402, alanine 420, and arginine 437 contribute to the acetyl-CoA site.

In the N-terminal section; belongs to the N-acetylglucosamine-1-phosphate uridyltransferase family. The protein in the C-terminal section; belongs to the transferase hexapeptide repeat family. In terms of assembly, homotrimer. The cofactor is Mg(2+).

Its subcellular location is the cytoplasm. It carries out the reaction alpha-D-glucosamine 1-phosphate + acetyl-CoA = N-acetyl-alpha-D-glucosamine 1-phosphate + CoA + H(+). The enzyme catalyses N-acetyl-alpha-D-glucosamine 1-phosphate + UTP + H(+) = UDP-N-acetyl-alpha-D-glucosamine + diphosphate. The protein operates within nucleotide-sugar biosynthesis; UDP-N-acetyl-alpha-D-glucosamine biosynthesis; N-acetyl-alpha-D-glucosamine 1-phosphate from alpha-D-glucosamine 6-phosphate (route II): step 2/2. Its pathway is nucleotide-sugar biosynthesis; UDP-N-acetyl-alpha-D-glucosamine biosynthesis; UDP-N-acetyl-alpha-D-glucosamine from N-acetyl-alpha-D-glucosamine 1-phosphate: step 1/1. It functions in the pathway bacterial outer membrane biogenesis; LPS lipid A biosynthesis. In terms of biological role, catalyzes the last two sequential reactions in the de novo biosynthetic pathway for UDP-N-acetylglucosamine (UDP-GlcNAc). The C-terminal domain catalyzes the transfer of acetyl group from acetyl coenzyme A to glucosamine-1-phosphate (GlcN-1-P) to produce N-acetylglucosamine-1-phosphate (GlcNAc-1-P), which is converted into UDP-GlcNAc by the transfer of uridine 5-monophosphate (from uridine 5-triphosphate), a reaction catalyzed by the N-terminal domain. This is Bifunctional protein GlmU from Pseudomonas putida (strain ATCC 700007 / DSM 6899 / JCM 31910 / BCRC 17059 / LMG 24140 / F1).